The following is a 380-amino-acid chain: MPVSDDSSSAFDLICAEIERQLRGGELLMDAAAASELLLTVRYQLDTQPRPLVIVHGPLFQAVKAARAQVYGRLIQLRHARCEVLDERWQLRPTGQRDVRALLIDVLNVLLAAITAAGVERAYACAERRAMAAAVVAKNYRDALGVELQCNSVCRAAAEAIHALAHRTGATEDADCLPPVDVIHADVTRRMHGEVATDVVAAGELVIAARHLLDPMPRGELSYGPLHEGGNAARKSVYRRLVQLWQARRAVTDGDVDLRDARTLLTDLDSILREMRTAATIQQSGTAGDGGGGRRQDSRRRNGPRRPARRGTSRGRRCAPRVAIGWHTPIGDPLAVEGVEEIGASLPGRESTPSDDGGSLHPSGRPRRVHRRRWCGLGLC.

2 disordered regions span residues 278-323 (AATI…PRVA) and 345-368 (SLPG…RPRR). Basic residues predominate over residues 301 to 319 (RNGPRRPARRGTSRGRRCA).

This is an uncharacterized protein from Mycobacterium tuberculosis (strain CDC 1551 / Oshkosh).